The chain runs to 198 residues: Protein hunchback (198 aa).

Disordered stretches follow at residues 16 to 116 and 158 to 198; these read SHHH…NPMQ and LTPP…KYMA. Basic residues predominate over residues 17 to 31; the sequence is HHHHHHHAHHSHHQH. Low complexity-rich tracts occupy residues 35–46 and 68–83; these read SNSNSNASSPHQ and QQQQ…QQQQ. A compositionally biased stretch (polar residues) spans 95 to 105; that stretch reads PSPSNNDQNSP. Over residues 179-198 the composition is skewed to basic and acidic residues; the sequence is EPEKEHDLMSNSSEDMKYMA.

The protein belongs to the hunchback C2H2-type zinc-finger protein family.

The protein resides in the nucleus. Its function is as follows. Gap class segmentation protein that controls development of head structures. The sequence is that of Protein hunchback (hb) from Drosophila cyrtoloma (Fruit fly).